Reading from the N-terminus, the 219-residue chain is MOB kinase activator-like 1 (219 aa).

Zn(2+)-binding residues include Cys-79, Cys-84, His-161, and His-166.

Belongs to the MOB1/phocein family. Interacts with and activates trc and wts. Post-translationally, phosphorylated by wts/mats kinase complex. Activated by phosphorylation by Hippo (Hpo) kinase which increases its affinity and its ability to activate Warts (Wts) kinase. As to expression, ubiquitously expressed at low levels in developing tissues (at protein level).

It is found in the cytoplasm. The protein resides in the cytoskeleton. It localises to the microtubule organizing center. Its subcellular location is the centrosome. The protein localises to the nucleus. It is found in the cytosol. The protein resides in the cell membrane. Functionally, coactivator of Warts (Wts) kinase in the Hippo/SWH (Sav/Wts/Hpo)signaling pathway, a signaling pathway that plays a pivotal role in organ size control and tumor suppression by restricting proliferation and promoting apoptosis. The core of this pathway is composed of a kinase cascade wherein Hippo (Hpo), in complex with its regulatory protein Salvador (Sav), phosphorylates and activates Warts (Wts) in complex with its regulatory protein Mats, which in turn phosphorylates and inactivates the Yorkie (Yki)oncoprotein. The Hippo/SWH signaling pathway inhibits the activity of the transcriptional complex formed by Scalloped (sd) and Yki and the target genes of this pathway include cyclin-E (cycE), diap1 and bantam. Mats is essential for early development and is required for proper chromosomal segregation in developing embryos. This Drosophila melanogaster (Fruit fly) protein is MOB kinase activator-like 1.